The sequence spans 362 residues: Adenosine deaminase (362 aa).

The Zn(2+) site is built by His-19 and His-21. Positions 21, 23, and 181 each coordinate substrate. Residue His-208 coordinates Zn(2+). The Proton donor role is filled by Glu-211. Asp-300 provides a ligand contact to Zn(2+).

This sequence belongs to the metallo-dependent hydrolases superfamily. Adenosine and AMP deaminases family. Adenosine deaminase subfamily. Requires Zn(2+) as cofactor.

It carries out the reaction adenosine + H2O + H(+) = inosine + NH4(+). The enzyme catalyses 2'-deoxyadenosine + H2O + H(+) = 2'-deoxyinosine + NH4(+). Its function is as follows. Catalyzes the hydrolytic deamination of adenosine and 2-deoxyadenosine. The sequence is that of Adenosine deaminase from Mycolicibacterium gilvum (strain PYR-GCK) (Mycobacterium gilvum (strain PYR-GCK)).